We begin with the raw amino-acid sequence, 372 residues long: Cyclin-dependent kinase 9 (372 aa).

One can recognise a Protein kinase domain in the interval 19 to 315; it reads YEKLAKIGQG…SDDALNHDFF (297 aa). 25 to 33 is an ATP binding site; it reads IGQGTFGEV. K35 carries the post-translational modification Phosphoserine. An N6-acetyllysine; by EP300/CBP, PCAF/KAT2B and GCN5/KAT2A modification is found at K44. K48 lines the ATP pocket. K48 bears the N6-acetyllysine; by PCAF/KAT2B and GCN5/KAT2A mark. The residue at position 54 (N54) is a Phosphothreonine. Position 104-106 (104-106) interacts with ATP; sequence DFC. The active-site Proton acceptor is the D149. The interval 166-191 is T-loop; that stretch reads ADFGLARAFSLAKNSQPNRYTNRVVT. An ATP-binding site is contributed by D167. Residue S175 is modified to Phosphoserine. Residue T186 is modified to Phosphothreonine; by CaMK1D. The segment at 343–372 is disordered; it reads RRKGSQITQQSTNQSRNPATTNQTEFERVF. Position 347 is a phosphoserine; by CDK9 and PKA (S347). Positions 347 to 366 are enriched in polar residues; it reads SQITQQSTNQSRNPATTNQT. Position 350 is a phosphothreonine; by CDK9 (T350). S353 bears the Phosphoserine; by CDK9 mark. T354 is modified (phosphothreonine; by CDK9). Phosphoserine; by CDK9 is present on S357. T362 and T363 each carry phosphothreonine; by CDK9.

It belongs to the protein kinase superfamily. CMGC Ser/Thr protein kinase family. CDC2/CDKX subfamily. As to quaternary structure, component of the super elongation complex (SEC), at least composed of EAF1, EAF2, CDK9, MLLT3/AF9, AFF (AFF1 or AFF4), the P-TEFb complex and ELL (ELL, ELL2 or ELL3). Associates with CCNT1/cyclin-T1, CCNT2/cyclin-T2 (isoform A and isoform B) or CCNK/cyclin-K to form active P-TEFb. P-TEFb forms a complex with AFF4/AF5Q31 and is part of the super elongation complex (SEC). Component of a complex which is composed of at least 5 members: HTATSF1/Tat-SF1, P-TEFb complex, RNA pol II, SUPT5H and NCL/nucleolin. Associates with UBR5 and forms a transcription regulatory complex composed of CDK9, RNAP II, UBR5 and TFIIS/TCEA1 that can stimulate target gene transcription (e.g. gamma fibrinogen/FGG) by recruiting their promoters. Component of the 7SK snRNP inactive complex which is composed of at least 8 members: P-TEFb (composed of CDK9 and CCNT1/cyclin-T1), HEXIM1, HEXIM2, LARP7, BCDIN3, SART3 proteins and 7SK and U6 snRNAs. This inactive 7SK snRNP complex can also interact with NCOR1 and HDAC3, probably to regulate CDK9 acetylation. Release of P-TEFb from P-TEFb/7SK snRNP complex requires both PP2B to transduce calcium Ca(2+) signaling in response to stimuli (e.g. UV or hexamethylene bisacetamide (HMBA)) and PPP1CA to dephosphorylate Thr-186. This released P-TEFb remains inactive in the pre-initiation complex with BRD4 until new Thr-186 phosphorylation occurs after the synthesis of a short RNA. Interacts with BRD4; to target chromatin binding. Interacts with JMJD6. Interacts with activated nuclear STAT3 and RELA/p65. Binds to AR and MYOD1. Forms a complex composed of CDK9, CCNT1/cyclin-T1, EP300 and GATA4 that stimulates hypertrophy in cardiomyocytes. The large PER complex involved in the repression of transcriptional termination is composed of at least PER2, CDK9, DDX5, DHX9, NCBP1 and POLR2A. Interacts with HSF1. Interacts with TBX21. Isoform 3: binds to KU70/XRCC6. Interacts with WDR43. Interacts with ZMYND8; the association appears to occur between homodimeric ZMYND8 and the activated form of the P-TEFb complex. (Microbial infection) Interacts with the acidic/proline-rich region of HIV-1 and HIV-2 Tat via T-loop region and is thus required for HIV to hijack host transcription machinery during its replication through cooperative binding to viral TAR RNA. In terms of assembly, (Microbial infection) Interacts with human herpes virus 1 (HHV-1) protein ICP22; this interaction blocks the recruitment of positive transcription elongation factor b (P-TEFb) to the viral promoter. Autophosphorylation at Thr-186, Ser-347, Thr-350, Ser-353, Thr-354 and Ser-357 triggers kinase activity by promoting cyclin and substrate binding (e.g. HIV TAT) upon conformational changes. Thr-186 phosphorylation requires the calcium Ca(2+) signaling pathway, including CaMK1D and calmodulin. This inhibition is relieved by Thr-29 dephosphorylation. However, phosphorylation at Thr-29 is inhibitory within the HIV transcription initiation complex. Phosphorylation at Ser-175 inhibits kinase activity. Can be phosphorylated on either Thr-362 or Thr-363 but not on both simultaneously. Post-translationally, dephosphorylation of Thr-186 by PPM1A and PPM1B blocks CDK9 activity and may lead to CDK9 proteasomal degradation. However, PPP1CA-mediated Thr-186 dephosphorylation is required to release P-TEFb from its inactive P-TEFb/7SK snRNP complex. Dephosphorylated at Ser-347 by the PNUTS-PP1 complex during RNA polymerase II transcription pause-release. Dephosphorylation of C-terminus Thr and Ser residues by protein phosphatase-1 (PP1) triggers CDK9 activity, contributing to the activation of HIV-1 transcription. In terms of processing, N6-acetylation of Lys-44 promotes kinase activity, whereas acetylation of both Lys-44 and Lys-48 mediated by PCAF/KAT2B and GCN5/KAT2A reduces kinase activity. The acetylated form associates with PML bodies in the nuclear matrix and with the transcriptionally silent HIV-1 genome; deacetylated upon transcription stimulation. Deacetylated by SIRT7, promoting the kinase activity and subsequent 'Ser-2' phosphorylation of the C-terminal domain (CTD) of RNA polymerase II. Polyubiquitinated and thus activated by UBR5. This ubiquitination is promoted by TFIIS/TCEA1 and favors 'Ser-2' phosphorylation of RPB1/POLR2A CTD. As to expression, ubiquitous.

It is found in the nucleus. The protein localises to the cytoplasm. Its subcellular location is the PML body. The catalysed reaction is L-seryl-[protein] + ATP = O-phospho-L-seryl-[protein] + ADP + H(+). The enzyme catalyses L-threonyl-[protein] + ATP = O-phospho-L-threonyl-[protein] + ADP + H(+). It catalyses the reaction [DNA-directed RNA polymerase] + ATP = phospho-[DNA-directed RNA polymerase] + ADP + H(+). Its activity is regulated as follows. Inhibited by CDKI-71, CR8, GPC-286199, AG-024322, flavopiridol (alvocidib), RBG-286147, anilinopyrimidine 32, arylazopyrazole 31b, indirubin 3'-monoxime, meriolin 3,P276-00, olomoucine II, pyrazolotriazine, meriolin, variolin, thiazolyl-pyrimidine, thiazolyl-pyrimidine, indirubin-30-monoxime, ZK 304709, AG-012986, AT7519, R547, RGB-286638, imidazole pyrimidine, EXEL-3700, EXEL-8647, 5,6-dichloro-1-b-ribofur-anosyl-benzimidazole (DRB), P276-00, roscovitine (seliciclib, CYC202) and SNS-032 (BMS-387032). Activation by Thr-186 phosphorylation is calcium Ca(2+) signaling pathway-dependent; actively inactivated by dephosphorylation mediated by PPP1CA, PPM1A and PPM1B. Reversibly repressed by acetylation at Lys-44 and Lys-48. Its function is as follows. Protein kinase involved in the regulation of transcription. Member of the cyclin-dependent kinase pair (CDK9/cyclin-T) complex, also called positive transcription elongation factor b (P-TEFb), which facilitates the transition from abortive to productive elongation by phosphorylating the CTD (C-terminal domain) of the large subunit of RNA polymerase II (RNAP II) POLR2A, SUPT5H and RDBP. This complex is inactive when in the 7SK snRNP complex form. Phosphorylates EP300, MYOD1, RPB1/POLR2A and AR and the negative elongation factors DSIF and NELFE. Regulates cytokine inducible transcription networks by facilitating promoter recognition of target transcription factors (e.g. TNF-inducible RELA/p65 activation and IL-6-inducible STAT3 signaling). Promotes RNA synthesis in genetic programs for cell growth, differentiation and viral pathogenesis. P-TEFb is also involved in cotranscriptional histone modification, mRNA processing and mRNA export. Modulates a complex network of chromatin modifications including histone H2B monoubiquitination (H2Bub1), H3 lysine 4 trimethylation (H3K4me3) and H3K36me3; integrates phosphorylation during transcription with chromatin modifications to control co-transcriptional histone mRNA processing. The CDK9/cyclin-K complex has also a kinase activity towards CTD of RNAP II and can substitute for CDK9/cyclin-T P-TEFb in vitro. Replication stress response protein; the CDK9/cyclin-K complex is required for genome integrity maintenance, by promoting cell cycle recovery from replication arrest and limiting single-stranded DNA amount in response to replication stress, thus reducing the breakdown of stalled replication forks and avoiding DNA damage. In addition, probable function in DNA repair of isoform 2 via interaction with KU70/XRCC6. Promotes cardiac myocyte enlargement. RPB1/POLR2A phosphorylation on 'Ser-2' in CTD activates transcription. AR phosphorylation modulates AR transcription factor promoter selectivity and cell growth. DSIF and NELF phosphorylation promotes transcription by inhibiting their negative effect. The phosphorylation of MYOD1 enhances its transcriptional activity and thus promotes muscle differentiation. Catalyzes phosphorylation of KAT5, promoting KAT5 recruitment to chromatin and histone acetyltransferase activity. This is Cyclin-dependent kinase 9 from Homo sapiens (Human).